The sequence spans 489 residues: Virion host shutoff protein (489 aa).

4 disordered regions span residues 110 to 135 (EEASDVDASPPPSPITDSRPSSAFSN), 142 to 161 (SLASGTRGTAGSGAALPSAA), 285 to 316 (RSQTRRAIRREHTSSRSTETRPPLPPAAGGTE), and 333 to 363 (YEDDEDLPLDPRDVTGGHPGPRSSSSEILTP). Residues 124–134 (ITDSRPSSAFS) are compositionally biased toward polar residues.

This sequence belongs to the herpesviridae VHS protein family. Interacts with human EIF4H, EIF4A1 and EIF4A2; interaction with eIF4AI and EIF4A2 presumably allows Vhs protein to associate with the eIF4F cap-binding complex.

It localises to the virion. In terms of biological role, minor structural protein that acts as an endoribonuclease during lytic infection. Degrades host mRNAs in the cytoplasm by cutting them at preferred sites, including some in regions of translation initiation. Together with inhibition of host splicing by ICP27, contributes to an overall decrease in host protein synthesis. Also, after the onset of viral transcription, accelerates the turnover of viral mRNA, thereby facilitating the sequential expression of different classes of viral genes. Binds translation initiation factors eIF4H, eIF4AI, and eIF4AII, thereby may interact directly with the translation initiation complex and thus digest specifically mRNAs. Also impedes antigen presentation by major histocompatibility complex class I and class II molecules, inhibits secretion of cytokines that would otherwise recruit lymphocytes and neutrophils cells to the site of infection and blocks the activation of dendritic cells. Impedes the alpha/beta interferon-mediated response to infection by evading the cGAS/ STING-mediated DNA-sensing pathway and degrading CGAS via its RNase activity. This is Virion host shutoff protein (UL41) from Human herpesvirus 1 (strain KOS) (HHV-1).